A 203-amino-acid polypeptide reads, in one-letter code: 3-isopropylmalate dehydratase small subunit (203 aa).

Belongs to the LeuD family. LeuD type 1 subfamily. As to quaternary structure, heterodimer of LeuC and LeuD.

It catalyses the reaction (2R,3S)-3-isopropylmalate = (2S)-2-isopropylmalate. The protein operates within amino-acid biosynthesis; L-leucine biosynthesis; L-leucine from 3-methyl-2-oxobutanoate: step 2/4. Its function is as follows. Catalyzes the isomerization between 2-isopropylmalate and 3-isopropylmalate, via the formation of 2-isopropylmaleate. The sequence is that of 3-isopropylmalate dehydratase small subunit from Rhodospirillum centenum (strain ATCC 51521 / SW).